Here is a 216-residue protein sequence, read N- to C-terminus: MAVALIFATRARIKILFFDMIFSLEKDPFDLFSKWYKAVLNSPCEQPTAMTLATCSKDCIPSARVVLLKEYSKEGFVFFTNVNSKKGKELTENPKAALVFHWIEFARQVRIEGEVKLLNDERTDKYFSSRALGSQISAWCSKQSSILKDWQDFEQAIKLKEKEFHNTQVSRPDFWVGFCVIPKVIEFWQEGEYRKHIRFRYTLVEGSDWKVEQLYP.

FMN is bound by residues Arg64–Lys69, Phe79–Thr80, Lys85, Lys86, and Gln108. Lys69 serves as a coordination point for substrate. Residues Tyr126, Arg130, and Ser134 each coordinate substrate. Residues Gln143 to Ser144 and Trp188 each bind FMN. Arg194–His196 is a binding site for substrate. Arg198 provides a ligand contact to FMN.

The protein belongs to the pyridoxamine 5'-phosphate oxidase family. Homodimer. It depends on FMN as a cofactor.

It carries out the reaction pyridoxamine 5'-phosphate + O2 + H2O = pyridoxal 5'-phosphate + H2O2 + NH4(+). The enzyme catalyses pyridoxine 5'-phosphate + O2 = pyridoxal 5'-phosphate + H2O2. It functions in the pathway cofactor metabolism; pyridoxal 5'-phosphate salvage; pyridoxal 5'-phosphate from pyridoxamine 5'-phosphate: step 1/1. It participates in cofactor metabolism; pyridoxal 5'-phosphate salvage; pyridoxal 5'-phosphate from pyridoxine 5'-phosphate: step 1/1. Functionally, catalyzes the oxidation of either pyridoxine 5'-phosphate (PNP) or pyridoxamine 5'-phosphate (PMP) into pyridoxal 5'-phosphate (PLP). This is Pyridoxine/pyridoxamine 5'-phosphate oxidase from Wolbachia pipientis wMel.